A 201-amino-acid chain; its full sequence is Putative manganese efflux pump MntP (201 aa).

The next 6 membrane-spanning stretches (helical) occupy residues 3-23 (LVSIILISIGLSMDAFAVSIT), 39-59 (IGLFFGGFQALMPLIGWSIGI), 65-85 (IAALDHWIALILLSIIGGKMI), 116-136 (LTLLAIATSIDALAIGVSFAF), 141-161 (IINTIIIIGSITFVICFIGVM), and 176-196 (ILGGIVLIFIGIKIFIEHTNI).

It belongs to the MntP (TC 9.B.29) family.

The protein localises to the cell membrane. In terms of biological role, probably functions as a manganese efflux pump. The protein is Putative manganese efflux pump MntP of Clostridium botulinum (strain Loch Maree / Type A3).